We begin with the raw amino-acid sequence, 311 residues long: Ribonuclease HIII (311 aa).

In terms of domain architecture, RNase H type-2 spans 95 to 311 (MSIVGSDEVG…NTEKAFRLLK (217 aa)). A divalent metal cation contacts are provided by aspartate 101, glutamate 102, and aspartate 206.

This sequence belongs to the RNase HII family. RnhC subfamily. Mn(2+) serves as cofactor. It depends on Mg(2+) as a cofactor.

The protein resides in the cytoplasm. The enzyme catalyses Endonucleolytic cleavage to 5'-phosphomonoester.. Functionally, endonuclease that specifically degrades the RNA of RNA-DNA hybrids. This chain is Ribonuclease HIII, found in Bacillus cereus (strain ATCC 10987 / NRS 248).